Consider the following 667-residue polypeptide: DNA ligase (667 aa).

Residues 32–36 (DKDYD) and 80–81 (SL) contribute to the NAD(+) site. Lys-121 functions as the N6-AMP-lysine intermediate in the catalytic mechanism. 3 residues coordinate NAD(+): Arg-143, Glu-178, and Lys-314. Zn(2+)-binding residues include Cys-407, Cys-410, Cys-423, and Cys-429. The BRCT domain occupies 587–667 (IVESIFKDKT…EFEKMLGRES (81 aa)).

Belongs to the NAD-dependent DNA ligase family. LigA subfamily. It depends on Mg(2+) as a cofactor. Mn(2+) is required as a cofactor.

It catalyses the reaction NAD(+) + (deoxyribonucleotide)n-3'-hydroxyl + 5'-phospho-(deoxyribonucleotide)m = (deoxyribonucleotide)n+m + AMP + beta-nicotinamide D-nucleotide.. Its function is as follows. DNA ligase that catalyzes the formation of phosphodiester linkages between 5'-phosphoryl and 3'-hydroxyl groups in double-stranded DNA using NAD as a coenzyme and as the energy source for the reaction. It is essential for DNA replication and repair of damaged DNA. The sequence is that of DNA ligase from Clostridium botulinum (strain Eklund 17B / Type B).